A 211-amino-acid polypeptide reads, in one-letter code: ATP phosphoribosyltransferase (211 aa).

The protein belongs to the ATP phosphoribosyltransferase family. Short subfamily. As to quaternary structure, heteromultimer composed of HisG and HisZ subunits.

The protein localises to the cytoplasm. The enzyme catalyses 1-(5-phospho-beta-D-ribosyl)-ATP + diphosphate = 5-phospho-alpha-D-ribose 1-diphosphate + ATP. The protein operates within amino-acid biosynthesis; L-histidine biosynthesis; L-histidine from 5-phospho-alpha-D-ribose 1-diphosphate: step 1/9. Its function is as follows. Catalyzes the condensation of ATP and 5-phosphoribose 1-diphosphate to form N'-(5'-phosphoribosyl)-ATP (PR-ATP). Has a crucial role in the pathway because the rate of histidine biosynthesis seems to be controlled primarily by regulation of HisG enzymatic activity. This is ATP phosphoribosyltransferase (hisG) from Pseudomonas aeruginosa (strain ATCC 15692 / DSM 22644 / CIP 104116 / JCM 14847 / LMG 12228 / 1C / PRS 101 / PAO1).